The sequence spans 452 residues: Cobyrinate a,c-diamide synthase (452 aa).

In terms of domain architecture, GATase cobBQ-type spans 248–441; that stretch reads RVAYALDAAF…LHIHFYQNLA (194 aa). Catalysis depends on C330, which acts as the Nucleophile.

The protein belongs to the CobB/CbiA family. Mg(2+) is required as a cofactor.

The catalysed reaction is cob(II)yrinate + 2 L-glutamine + 2 ATP + 2 H2O = cob(II)yrinate a,c diamide + 2 L-glutamate + 2 ADP + 2 phosphate + 2 H(+). It participates in cofactor biosynthesis; adenosylcobalamin biosynthesis; cob(II)yrinate a,c-diamide from sirohydrochlorin (anaerobic route): step 10/10. Functionally, catalyzes the ATP-dependent amidation of the two carboxylate groups at positions a and c of cobyrinate, using either L-glutamine or ammonia as the nitrogen source. This chain is Cobyrinate a,c-diamide synthase, found in Listeria monocytogenes serovar 1/2a (strain ATCC BAA-679 / EGD-e).